The sequence spans 327 residues: Undecaprenyl-phosphate 4-deoxy-4-formamido-L-arabinose transferase (327 aa).

A run of 2 helical transmembrane segments spans residues 233-253 (ILSLIGSVVALSGFLLALLLI) and 268-288 (VFTLFAVLFMFIGAQFVGMGL).

The protein belongs to the glycosyltransferase 2 family.

The protein resides in the cell inner membrane. It carries out the reaction UDP-4-deoxy-4-formamido-beta-L-arabinose + di-trans,octa-cis-undecaprenyl phosphate = 4-deoxy-4-formamido-alpha-L-arabinopyranosyl di-trans,octa-cis-undecaprenyl phosphate + UDP. Its pathway is glycolipid biosynthesis; 4-amino-4-deoxy-alpha-L-arabinose undecaprenyl phosphate biosynthesis; 4-amino-4-deoxy-alpha-L-arabinose undecaprenyl phosphate from UDP-4-deoxy-4-formamido-beta-L-arabinose and undecaprenyl phosphate: step 1/2. It functions in the pathway bacterial outer membrane biogenesis; lipopolysaccharide biosynthesis. Its function is as follows. Catalyzes the transfer of 4-deoxy-4-formamido-L-arabinose from UDP to undecaprenyl phosphate. The modified arabinose is attached to lipid A and is required for resistance to polymyxin and cationic antimicrobial peptides. This Pectobacterium carotovorum subsp. carotovorum (strain PC1) protein is Undecaprenyl-phosphate 4-deoxy-4-formamido-L-arabinose transferase.